The following is a 414-amino-acid chain: Wilms tumor protein homolog A (414 aa).

Glycyl lysine isopeptide (Lys-Gly) (interchain with G-Cter in SUMO) cross-links involve residues Lys55 and Lys158. The 9aaTAD motif lies at 217 to 225; it reads MTWNQMNLG. C2H2-type zinc fingers lie at residues 288–312, 318–342, and 348–370; these read FMCA…SRKH, YQCD…QRRH, and FQCK…TRTH. 2 important for interaction with target DNA regions span residues 332–346 and 358–366; these read SDQL…TGIK and SRSDHLKTH. The short motif at 373–375 is the KTS motif element; it reads KTS. Residues 379–403 form a C2H2-type 4 zinc finger; it reads FSCRWPSCQKKFARSDELVRHHNMH.

This sequence belongs to the EGR C2H2-type zinc-finger protein family. Expressed around the pronephric anlage and in the pronephros; expression is restricted to the splanchnic mesoderm (the site where the glomus forms) from tailbud stages, and the glomus of early tadpoles. Not expressed in the pronephric tubules or pronephric duct. In tadpoles (stage 38-39), additional expression begins in the heart. Also expressed in the adult kidney (mesonephros).

Its subcellular location is the nucleus. The protein localises to the cytoplasm. It is found in the nucleus speckle. Functionally, transcription factor required for development of the vascular component of the pronephric kidney, the glomus; may repress tubule-specific gene expression in the portion of the pronephros fated to form the glomus. Recognizes and binds to the DNA sequence 5'-GCG(T/G)GGGCG-3'. Inhibits Wnt-signaling during embryonic development. Function may be isoform-specific: the isoform containing the KTS motif is less effective in inhibiting wnt signaling. The polypeptide is Wilms tumor protein homolog A (wt1-a) (Xenopus laevis (African clawed frog)).